We begin with the raw amino-acid sequence, 445 residues long: ATP-dependent protease ATPase subunit HslU (445 aa).

Residues I18, 60-65, D258, E323, and R395 each bind ATP; that span reads GVGKTE.

It belongs to the ClpX chaperone family. HslU subfamily. A double ring-shaped homohexamer of HslV is capped on each side by a ring-shaped HslU homohexamer. The assembly of the HslU/HslV complex is dependent on binding of ATP.

The protein localises to the cytoplasm. Its function is as follows. ATPase subunit of a proteasome-like degradation complex; this subunit has chaperone activity. The binding of ATP and its subsequent hydrolysis by HslU are essential for unfolding of protein substrates subsequently hydrolyzed by HslV. HslU recognizes the N-terminal part of its protein substrates and unfolds these before they are guided to HslV for hydrolysis. In Syntrophotalea carbinolica (strain DSM 2380 / NBRC 103641 / GraBd1) (Pelobacter carbinolicus), this protein is ATP-dependent protease ATPase subunit HslU.